Here is a 363-residue protein sequence, read N- to C-terminus: Chorismate synthase (363 aa).

Arg48 and Arg54 together coordinate NADP(+). FMN is bound by residues Arg125–Ser127, Asn237–Ala238, Gly277, Lys292–Ser296, and Arg318.

The protein belongs to the chorismate synthase family. As to quaternary structure, homotetramer. FMNH2 is required as a cofactor.

The catalysed reaction is 5-O-(1-carboxyvinyl)-3-phosphoshikimate = chorismate + phosphate. Its pathway is metabolic intermediate biosynthesis; chorismate biosynthesis; chorismate from D-erythrose 4-phosphate and phosphoenolpyruvate: step 7/7. Functionally, catalyzes the anti-1,4-elimination of the C-3 phosphate and the C-6 proR hydrogen from 5-enolpyruvylshikimate-3-phosphate (EPSP) to yield chorismate, which is the branch point compound that serves as the starting substrate for the three terminal pathways of aromatic amino acid biosynthesis. This reaction introduces a second double bond into the aromatic ring system. This is Chorismate synthase from Pseudomonas fluorescens (strain Pf0-1).